The primary structure comprises 64 residues: Large ribosomal subunit protein bL35 (64 aa).

Positions 1 to 28 are enriched in basic residues; it reads MPKMKTKSGAAKRFKKTAGGLKHKHAFK. A disordered region spans residues 1–64; sequence MPKMKTKSGA…ARVERSLRLR (64 aa). Over residues 53-64 the composition is skewed to basic and acidic residues; that stretch reads DVARVERSLRLR.

The protein belongs to the bacterial ribosomal protein bL35 family.

The sequence is that of Large ribosomal subunit protein bL35 from Pseudomonas aeruginosa (strain LESB58).